Reading from the N-terminus, the 152-residue chain is Protein SprT-like (152 aa).

Residues 7-148 (QRLVEEVSLQ…GKCKGKLILI (142 aa)) form the SprT-like domain. Histidine 67 lines the Zn(2+) pocket. Residue glutamate 68 is part of the active site. Zn(2+) is bound at residue histidine 71.

Belongs to the SprT family. The cofactor is Zn(2+).

It localises to the cytoplasm. This is Protein SprT-like from Bacillus thuringiensis subsp. konkukian (strain 97-27).